Reading from the N-terminus, the 158-residue chain is RNA pyrophosphohydrolase (158 aa).

Positions 8-152 (PYRPCAGVML…KRALYRGLIE (145 aa)) constitute a Nudix hydrolase domain. A Nudix box motif is present at residues 42–63 (GGIDEGEDAEKAAIRELGEETG).

The protein belongs to the Nudix hydrolase family. RppH subfamily. A divalent metal cation serves as cofactor.

Its function is as follows. Accelerates the degradation of transcripts by removing pyrophosphate from the 5'-end of triphosphorylated RNA, leading to a more labile monophosphorylated state that can stimulate subsequent ribonuclease cleavage. This chain is RNA pyrophosphohydrolase, found in Sphingopyxis alaskensis (strain DSM 13593 / LMG 18877 / RB2256) (Sphingomonas alaskensis).